A 161-amino-acid polypeptide reads, in one-letter code: Tropomyosin-2 (161 aa).

Positions 1 to 161 form a coiled coil; it reads MEKIKEKLNS…DEIANSLENL (161 aa). A compositionally biased stretch (basic and acidic residues) spans 32–43; the sequence is LEQSNTEKENEI. The tract at residues 32-97 is disordered; that stretch reads LEQSNTEKEN…NQDLEQQLED (66 aa). Residue S55 is modified to Phosphoserine. Over residues 62–83 the composition is skewed to polar residues; that stretch reads SQLSDTKQLAEDSNNLRSNNEN. S116 and S157 each carry phosphoserine.

In terms of assembly, homodimer.

The protein resides in the cytoplasm. It localises to the cytoskeleton. Involved in cell morphogenesis. Binds to F-actin and stabilizes the actin filaments. The protein is Tropomyosin-2 (TPM2) of Saccharomyces cerevisiae (strain ATCC 204508 / S288c) (Baker's yeast).